The following is a 272-amino-acid chain: Eukaryotic translation initiation factor 3 subunit G (272 aa).

Disordered stretches follow at residues 1-28 (MPALDEIKSSWADEVELDSGSLPPPTEI) and 157-188 (APTTAKSGKYVPPSMRDSQKPGMGGNPRGRDD). Residues 190–268 (TAIRISNLSE…LILNVEWSKP (79 aa)) enclose the RRM domain.

The protein belongs to the eIF-3 subunit G family. As to quaternary structure, component of the eukaryotic translation initiation factor 3 (eIF-3) complex.

Its subcellular location is the cytoplasm. Functionally, RNA-binding component of the eukaryotic translation initiation factor 3 (eIF-3) complex, which is involved in protein synthesis of a specialized repertoire of mRNAs and, together with other initiation factors, stimulates binding of mRNA and methionyl-tRNAi to the 40S ribosome. The eIF-3 complex specifically targets and initiates translation of a subset of mRNAs involved in cell proliferation. This subunit can bind 18S rRNA. The protein is Eukaryotic translation initiation factor 3 subunit G of Aedes aegypti (Yellowfever mosquito).